Here is a 317-residue protein sequence, read N- to C-terminus: Protein translocase subunit SecF (317 aa).

A run of 6 helical transmembrane segments spans residues 11 to 31 (FYLL…LFGL), 135 to 155 (RSIV…AFAF), 166 to 186 (ICAI…FAIL), 197 to 217 (LFVT…IVVF), 244 to 266 (LVRS…FFGG), and 276 to 298 (LLIG…LVSW).

This sequence belongs to the SecD/SecF family. SecF subfamily. In terms of assembly, forms a complex with SecD. Part of the essential Sec protein translocation apparatus which comprises SecA, SecYEG and auxiliary proteins SecDF. Other proteins may also be involved.

Its subcellular location is the cell membrane. Part of the Sec protein translocase complex. Interacts with the SecYEG preprotein conducting channel. SecDF uses the proton motive force (PMF) to complete protein translocation after the ATP-dependent function of SecA. The protein is Protein translocase subunit SecF of Thermobaculum terrenum (strain ATCC BAA-798 / CCMEE 7001 / YNP1).